Reading from the N-terminus, the 269-residue chain is Ribosomal RNA small subunit methyltransferase A (269 aa).

S-adenosyl-L-methionine contacts are provided by isoleucine 17, glycine 42, glutamate 64, aspartate 89, and asparagine 109.

It belongs to the class I-like SAM-binding methyltransferase superfamily. rRNA adenine N(6)-methyltransferase family. RsmA subfamily.

The protein resides in the cytoplasm. The enzyme catalyses adenosine(1518)/adenosine(1519) in 16S rRNA + 4 S-adenosyl-L-methionine = N(6)-dimethyladenosine(1518)/N(6)-dimethyladenosine(1519) in 16S rRNA + 4 S-adenosyl-L-homocysteine + 4 H(+). Specifically dimethylates two adjacent adenosines (A1518 and A1519) in the loop of a conserved hairpin near the 3'-end of 16S rRNA in the 30S particle. May play a critical role in biogenesis of 30S subunits. The polypeptide is Ribosomal RNA small subunit methyltransferase A (Anaplasma phagocytophilum (strain HZ)).